Here is a 459-residue protein sequence, read N- to C-terminus: Chromosomal replication initiator protein DnaA (459 aa).

Residues 1–90 form a domain I, interacts with DnaA modulators region; sequence MAVSLWQQCI…RPASKPAAPA (90 aa). The segment at 75-124 is disordered; that stretch reads RFDIGSRPASKPAAPAASTKSPVAPAAKSPSKPSFNSNEPAATANHRSNM. Over residues 80 to 108 the composition is skewed to low complexity; sequence SRPASKPAAPAASTKSPVAPAAKSPSKPS. The interval 91 to 122 is domain II; that stretch reads ASTKSPVAPAAKSPSKPSFNSNEPAATANHRS. Residues 109 to 124 are compositionally biased toward polar residues; that stretch reads FNSNEPAATANHRSNM. Residues 123 to 339 form a domain III, AAA+ region region; the sequence is NMNPTYQFDN…GALNRVIANA (217 aa). Residues glycine 167, glycine 169, lysine 170, and threonine 171 each coordinate ATP. A domain IV, binds dsDNA region spans residues 340–459; that stretch reads NFTGRPITID…YANLIRTLSS (120 aa).

Belongs to the DnaA family. In terms of assembly, oligomerizes as a right-handed, spiral filament on DNA at oriC.

It is found in the cytoplasm. Plays an essential role in the initiation and regulation of chromosomal replication. ATP-DnaA binds to the origin of replication (oriC) to initiate formation of the DNA replication initiation complex once per cell cycle. Binds the DnaA box (a 9 base pair repeat at the origin) and separates the double-stranded (ds)DNA. Forms a right-handed helical filament on oriC DNA; dsDNA binds to the exterior of the filament while single-stranded (ss)DNA is stabiized in the filament's interior. The ATP-DnaA-oriC complex binds and stabilizes one strand of the AT-rich DNA unwinding element (DUE), permitting loading of DNA polymerase. After initiation quickly degrades to an ADP-DnaA complex that is not apt for DNA replication. Binds acidic phospholipids. In Shewanella loihica (strain ATCC BAA-1088 / PV-4), this protein is Chromosomal replication initiator protein DnaA.